The sequence spans 540 residues: MYYLNKMLEYNKENGIIINKYIRKTIQKQIRIHNKYIYRYDRVTQAIEWIEDNFYLTTGNLMKIELLPTQRWWYELMLGYDMIDEKGVQVNLINEIFLNLGRGSGKSSLMATRVLNWMILGGQYGGESLVIAYDNTQARHVFDQVRNQTEASDTLRVYNENKIFKSTKQGLEFASFKTTFKKQTNDTLRAQGGNSSLNIFDEVHTYGEDITESVNKGSRQKQDNWQSIYITSGGLKRDGLYDKLVERFKSEEEFYNDRSFGLLYMLENHEQVKDKKNWTMALPLIGSVPKWSGVIEEYELAQGDPALQNKFLAFNMGLPMQDTAYYFTPQDTKLTDFNLSVFNKNRTYVGIDLSLIGDLTAVSFVCELEGKTYSHTLTFSVRSQYEQLDTEQQELWTEFVDRGELILLDTEYINVNDLIPHINDFRTKTGCRLRKIGYDPARYEILKGLIERYFFDKDGDNQRAIRQGFSMNDYIKLLKSKLVENKLIHNQKVMQWALNNTAVKIGQSGDYMYTKKLEKDKIDPTVALTMALEMAVSDEV.

Residues aspartate 352, aspartate 424, and aspartate 523 each contribute to the Mn(2+) site.

Belongs to the skunavirus terminase large subunit family. Interacts with the terminase small subunit; the active complex is probably heterooligomeric. It depends on Mn(2+) as a cofactor. Requires Mg(2+) as cofactor.

Its function is as follows. The terminase large subunit acts as an ATP driven molecular motor necessary for viral DNA translocation into empty capsids and as an endonuclease that cuts the viral genome to initiate and to end a packaging reaction. The terminase lies at a unique vertex of the procapsid and is composed of two subunits, a small terminase subunit involved in viral DNA recognition (packaging sequence), and a large terminase subunit possessing endonucleolytic and ATPase activities. Both terminase subunits heterooligomerize and are docked on the portal protein to form the packaging machine. The terminase large subunit exhibits endonuclease activity and cleaves the viral genome concatemer. This chain is Terminase large subunit, found in Lactococcus lactis (Lactococcus lactis bacteriophage SK1).